The chain runs to 319 residues: Free fatty acid receptor 3 (319 aa).

Residues 1 to 15 (MDTSFFPGNHWLFFS) are Extracellular-facing. The helical transmembrane segment at 16-36 (VDLLVFLVGLPLNVMALVVFV) threads the bilayer. The Cytoplasmic segment spans residues 37–43 (NKLRRRP). The helical transmembrane segment at 44 to 64 (VAVDLLLLNLTISDLLLLLFL) threads the bilayer. Over 65-98 (PFRIVEAACGMKWILPFIFCPLSGFLFFTTIYLT) the chain is Extracellular. Residues cysteine 84 and cysteine 165 are joined by a disulfide bond. The helical transmembrane segment at 99–119 (SLFLMTVSIERFLSVAYPLWY) threads the bilayer. Over 120 to 127 (KTRPRLAQ) the chain is Cytoplasmic. The helical transmembrane segment at 128-148 (AGLVSGICWFLASAHCSVIYV) threads the bilayer. At 149–183 (TEYWGNATYSQGTNGTCYLEFREDQLAILLPVRLE) the chain is on the extracellular side. Residues 184–206 (MAVVLFMVPLCITSYCYSRLVWI) traverse the membrane as a helical segment. The Cytoplasmic portion of the chain corresponds to 207–218 (LSQGASRRRRKR). The helical transmembrane segment at 219 to 239 (VMGLLVATLLIFFVCFGPYNM) threads the bilayer. At 240 to 254 (SHVVGYVRGESPTWR) the chain is on the extracellular side. The helical transmembrane segment at 255-275 (SYVLLLSTLNSCIDPLVFYFS) threads the bilayer. Over 276–319 (SSKFQADFHQLLSRLIRACVPWTQEVSLELKVKNGEEPSKECPS) the chain is Cytoplasmic.

The protein belongs to the G-protein coupled receptor 1 family. As to expression, expressed in the sympathetic nervous system.

It is found in the cell membrane. Its function is as follows. G protein-coupled receptor that is activated by a major product of dietary fiber digestion, the short chain fatty acids (SCFAs), and that plays a role in the regulation of whole-body energy homeostasis and in intestinal immunity. In omnivorous mammals, the short chain fatty acids acetate, propionate and butyrate are produced primarily by the gut microbiome that metabolizes dietary fibers. SCFAs serve as a source of energy but also act as signaling molecules. That G protein-coupled receptor is probably coupled to the pertussis toxin-sensitive, G(i/o)-alpha family of G proteins. Its activation results in the formation of inositol 1,4,5-trisphosphate, the mobilization of intracellular calcium, the phosphorylation of the MAPK3/ERK1 and MAPK1/ERK2 kinases and the inhibition of intracellular cAMP accumulation. Activated by SCFAs and by beta-hydroxybutyrate, a ketone body produced by the liver upon starvation, it inhibits N-type calcium channels and modulates the activity of sympathetic neurons through a signaling cascade involving the beta and gamma subunits of its coupled G protein, phospholipase C and MAP kinases. Thereby, it may regulate energy expenditure through the control of the sympathetic nervous system that controls for instance heart rate. Upon activation by SCFAs accumulating in the intestine, it may also signal to the brain via neural circuits which in turn would regulate intestinal gluconeogenesis. May also control the production of hormones involved in whole-body energy homeostasis. May for instance, regulate blood pressure through renin secretion. May also regulate secretion of the PYY peptide by enteroendocrine cells and control gut motility, intestinal transit rate, and the harvesting of energy from SCFAs produced by gut microbiota. May also indirectly regulate the production of LEP/Leptin, a hormone acting on the CNS to inhibit food intake, in response to the presence of short-chain fatty acids in the intestine. Finally, may also play a role in glucose homeostasis. Besides its role in energy homeostasis, may play a role in intestinal immunity. May mediate the activation of the inflammatory and immune response by SCFAs in the gut, regulating the rapid production of chemokines and cytokines by intestinal epithelial cells. This chain is Free fatty acid receptor 3 (Ffar3), found in Rattus norvegicus (Rat).